We begin with the raw amino-acid sequence, 657 residues long: Methionine--tRNA ligase (657 aa).

Positions 13–23 (YYPSGNLHIGH) match the 'HIGH' region motif. The 'KMSKS' region signature appears at 308–312 (KMSKS). Lys-311 serves as a coordination point for ATP. The tRNA-binding domain occupies 557 to 657 (DFDKVEIKAA…SAIPNGAVIK (101 aa)).

This sequence belongs to the class-I aminoacyl-tRNA synthetase family. MetG type 2B subfamily. In terms of assembly, homodimer.

The protein resides in the cytoplasm. It carries out the reaction tRNA(Met) + L-methionine + ATP = L-methionyl-tRNA(Met) + AMP + diphosphate. Functionally, is required not only for elongation of protein synthesis but also for the initiation of all mRNA translation through initiator tRNA(fMet) aminoacylation. The protein is Methionine--tRNA ligase of Staphylococcus aureus (strain MW2).